The chain runs to 449 residues: FAD-linked oxidoreductase janO (449 aa).

Residues 32 to 203 form the FAD-binding PCMH-type domain; it reads PDAQPLAIIK…TRFHLNTRPL (172 aa).

It belongs to the oxygen-dependent FAD-linked oxidoreductase family. FAD is required as a cofactor.

Its pathway is secondary metabolite biosynthesis. In terms of biological role, FAD-linked oxidoreductase; part of the gene cluster that mediates the biosynthesis of the indole diterpenes janthitremanes such as shearinine K or shearinine A. The geranylgeranyl diphosphate (GGPP) synthase janG catalyzes the first step in janthitremane biosynthesis via conversion of farnesyl pyrophosphate and isopentyl pyrophosphate into geranylgeranyl pyrophosphate (GGPP). Condensation of indole-3-glycerol phosphate with GGPP by the prenyl transferase janC then forms 3-geranylgeranylindole (3-GGI). Epoxidation by the FAD-dependent monooxygenase janM leads to a epoxidized-GGI that is substrate of the terpene cyclase janB for cyclization to yield paspaline. Paspaline is subsequently converted to 13-desoxypaspaline by the cytochrome P450 monooxygenase janP, via beta-PC-M6 in a series of alpha-face oxidations. The cytochrome P450 monooxygenase janQ is proposed to carry out sequential beta-face oxidation steps at C-7 and C-13 of 13-desoxypaspaline to form paspalicine and paspalinine respectively. The indole diterpene prenyltransferase janD may then convert paspalinine into shearinine K which is substrate of janO and/or additional enzymes for oxidation and cyclization to generate shearinine A. The polypeptide is FAD-linked oxidoreductase janO (Penicillium janthinellum (Penicillium vitale)).